A 514-amino-acid polypeptide reads, in one-letter code: Type-2 serine--tRNA ligase (514 aa).

Ala-313 is a binding site for L-serine. Position 315 (Cys-315) interacts with Zn(2+). Arg-344 lines the L-serine pocket. Residues Arg-344 to Glu-346 and Arg-355 to Val-356 each bind ATP. L-serine is bound at residue Arg-361–Glu-363. Zn(2+)-binding residues include Glu-363 and Cys-470. Arg-477 serves as a coordination point for ATP.

This sequence belongs to the class-II aminoacyl-tRNA synthetase family. Type-2 seryl-tRNA synthetase subfamily. Homodimer. It depends on Zn(2+) as a cofactor.

The protein localises to the cytoplasm. It catalyses the reaction tRNA(Ser) + L-serine + ATP = L-seryl-tRNA(Ser) + AMP + diphosphate + H(+). The catalysed reaction is tRNA(Sec) + L-serine + ATP = L-seryl-tRNA(Sec) + AMP + diphosphate + H(+). The protein operates within aminoacyl-tRNA biosynthesis; selenocysteinyl-tRNA(Sec) biosynthesis; L-seryl-tRNA(Sec) from L-serine and tRNA(Sec): step 1/1. Its function is as follows. Catalyzes the attachment of serine to tRNA(Ser). Is also able to aminoacylate tRNA(Sec) with serine, to form the misacylated tRNA L-seryl-tRNA(Sec), which will be further converted into selenocysteinyl-tRNA(Sec). The chain is Type-2 serine--tRNA ligase (serS) from Methanococcus maripaludis (strain DSM 14266 / JCM 13030 / NBRC 101832 / S2 / LL).